The following is a 71-amino-acid chain: High-potential iron-sulfur protein isozyme 2 (71 aa).

Positions 34, 37, 51, and 65 each coordinate [4Fe-4S] cluster.

The protein belongs to the high-potential iron-sulfur protein (HiPIP) family. As to quaternary structure, homodimer.

In terms of biological role, specific class of high-redox-potential 4Fe-4S ferredoxins. Functions in anaerobic electron transport in most purple and in some other photosynthetic bacteria and in at least one genus (Paracoccus) of halophilic, denitrifying bacteria. This Ectothiorhodospira shaposhnikovii (Ectothiorhodospira vacuolata) protein is High-potential iron-sulfur protein isozyme 2 (hip2).